A 198-amino-acid polypeptide reads, in one-letter code: Recombination protein RecR (198 aa).

The segment at 57–72 adopts a C4-type zinc-finger fold; that stretch reads CSVCGHITDQDPCYIC. Residues 80–175 enclose the Toprim domain; it reads SVICVVQDPK…KLSRIAHGLP (96 aa).

This sequence belongs to the RecR family.

May play a role in DNA repair. It seems to be involved in an RecBC-independent recombinational process of DNA repair. It may act with RecF and RecO. The polypeptide is Recombination protein RecR (Bacillus pumilus (strain SAFR-032)).